The following is a 350-amino-acid chain: MESETLTAKATITTTTLPSHDETKTESTEFEKNQKRYQDLISTFPHEKGWRPKEPLIEYGGYWWLPSLLEGCIHAQEFFQARPSDFLVCSYPKTGTTWLKALTFAIANRSRFDDSSNPLLKRNPHEFVPYIEIDFPFFPEVDVLKDKGNTLFSTHIPYELLPDSVVKSGCKMVYIWREPKDTFISMWTFLHKERTELGPVSNLEESFDMFCRGLSGYGPYLNHILAYWKAYQENPDRILFLKYETMRADPLPYVKSLAEFMGHGFTAEEEEKGVVEKVVNLCSFETLKNLEANKGEKDREDRPGVYANSAYFRKGKVGDWSNYLTPEMAARIDGLMEEKFKGTGLLEHGK.

At M1 the chain carries N-acetylmethionine. Over residues 1-17 the composition is skewed to low complexity; sequence MESETLTAKATITTTTL. The tract at residues 1–28 is disordered; sequence MESETLTAKATITTTTLPSHDETKTEST. Positions 19 to 28 are enriched in basic and acidic residues; it reads SHDETKTEST. 93–98 is a binding site for 3'-phosphoadenylyl sulfate; it reads KTGTTW. The active-site Proton acceptor is H155. Residues R177, S185, Y243, and 313 to 315 each bind 3'-phosphoadenylyl sulfate; that span reads RKG.

The protein belongs to the sulfotransferase 1 family. As to expression, expressed in roots, leaves and stems. Barely detected in siliques and flowers.

It localises to the cytoplasm. The enzyme catalyses an aliphatic (Z)-desulfo-glucosinolate + 3'-phosphoadenylyl sulfate = a (Z)-omega-(methylsulfanyl)-N-sulfo-alkylhydroximate S-glucoside + adenosine 3',5'-bisphosphate + H(+). Its activity is regulated as follows. Inhibited by phosphoadenosine 5'-phosphate (PAP). In terms of biological role, sulfotransferase that utilizes 3'-phospho-5'-adenylyl sulfate (PAPS) as sulfonate donor to catalyze the sulfate conjugation of desulfo-glucosinolates (dsGSs), the final step in the biosynthesis of the glucosinolate core structure. Preferred substrate are the long-chain desulfo-glucosinolates, 7-methylthioheptyl and 8-methylthiooctyl, derived from methionine. Substrate preference is desulfo-benzyl glucosinolate &gt; desulfo-4-methylthiobutyl glucosinolate &gt; desulfo-6-methylthiohexyl glucosinolate &gt; desulfo-3-methylthiopropyl glucosinolate &gt; desulfo-indol-3-yl methyl glucosinolate &gt; desulfo-singrin &gt; desulfo-3-butenyl glucosinolate. The polypeptide is Cytosolic sulfotransferase 18 (SOT18) (Arabidopsis thaliana (Mouse-ear cress)).